Consider the following 948-residue polypeptide: Protocadherin alpha-10 (948 aa).

The signal sequence occupies residues 1 to 28 (MVSRCSCLGVQCLLLSLLLLAAWEVGSG). 6 consecutive Cadherin domains span residues 29-132 (QLHY…PPRF), 133-241 (SVTE…APIF), 242-349 (DRPV…SPEV), 350-454 (IVTS…APAF), 455-564 (AQPE…APAL), and 587-689 (GHVV…APEV). Residues 29-695 (QLHYSVYEEA…APEVALVDVN (667 aa)) lie on the Extracellular side of the membrane. N-linked (GlcNAc...) asparagine glycosylation is found at asparagine 256 and asparagine 264. Asparagine 547 is a glycosylation site (N-linked (GlcNAc...) asparagine). Residues 696-716 (VYLIIAICAVSSLLVLTLLLY) traverse the membrane as a helical segment. The Cytoplasmic portion of the chain corresponds to 717-948 (TALRCSAAPT…GNSTTDNSDQ (232 aa)). PXXP repeat units follow at residues 732–735 (PVKP), 772–775 (PSLP), 797–800 (PRQP), 830–833 (PGGP), 871–874 (PGNP), and 889–892 (PGSP). Residues 732 to 892 (PVKPTLVCSS…PDKFIIPGSP (161 aa)) form a 6 X 4 AA repeats of P-X-X-P region. 2 disordered regions span residues 783 to 804 (DGED…NPDW) and 827 to 948 (RAGP…NSDQ). The segment covering 907–921 (DKSDFITFGKKEETK) has biased composition (basic and acidic residues).

It localises to the cell membrane. Potential calcium-dependent cell-adhesion protein. May be involved in the establishment and maintenance of specific neuronal connections in the brain. The chain is Protocadherin alpha-10 (PCDHA10) from Pan troglodytes (Chimpanzee).